A 100-amino-acid chain; its full sequence is Urease subunit gamma (100 aa).

Belongs to the urease gamma subunit family. In terms of assembly, heterotrimer of UreA (gamma), UreB (beta) and UreC (alpha) subunits. Three heterotrimers associate to form the active enzyme.

The protein localises to the cytoplasm. The catalysed reaction is urea + 2 H2O + H(+) = hydrogencarbonate + 2 NH4(+). It participates in nitrogen metabolism; urea degradation; CO(2) and NH(3) from urea (urease route): step 1/1. In Nocardia farcinica (strain IFM 10152), this protein is Urease subunit gamma.